The following is a 653-amino-acid chain: Ran-binding protein 9 (653 aa).

Pro residues predominate over residues 1 to 21 (MSGQPPPPPPQQQPPPPPPPA). The segment at 1–62 (MSGQPPPPPP…SAAAPFPHGD (62 aa)) is disordered. The span at 22 to 57 (SAAAPATAPPGLAVGPGPAAGVPVPGLAAGSSAAAP) shows a compositional bias: low complexity. In terms of domain architecture, B30.2/SPRY spans 72-259 (LQRRLKRLYP…VDANFGQHPF (188 aa)). The LisH domain maps to 290–322 (WQTMIQKMVSSYLVHHGYCATAEAFARSTDQTV). The interaction with CALB1 stretch occupies residues 326-332 (LASIKNR). Residues 328 to 385 (SIKNRQRIQKLVLAGRMGEAIETTQQLYPSLLERNPNLLFTLKVRQFIEMVNGTDSEV) enclose the CTLH domain. Lys-330 is subject to N6-acetyllysine. Residues 386-422 (RCLGGRSPKSQDSYPVSPRPFSSPSMSPSHGMSIHSL) form a disordered region. Positions 398-421 (SYPVSPRPFSSPSMSPSHGMSIHS) are enriched in low complexity. Ser-402 and Ser-412 each carry phosphoserine. The interaction with FMR1 stretch occupies residues 539-653 (AAIERMIHFG…AFATVEDYLH (115 aa)).

It belongs to the RANBP9/10 family. Part of a complex consisting of RANBP9, MKLN1 and GID8. Identified in the CTLH complex that contains GID4, RANBP9 and/or RANBP10, MKLN1, MAEA, RMND5A (or alternatively its paralog RMND5B), GID8, ARMC8, WDR26 and YPEL5. Within this complex, MAEA, RMND5A (or alternatively its paralog RMND5B), GID8, WDR26, and RANBP9 and/or RANBP10 form the catalytic core, while GID4, MKLN1, ARMC8 and YPEL5 have ancillary roles. Interacts with GTP-bound Ran, AR, CDC2L1/p110C, CALB1, S100A7, USP11, SOS1 or SOS2, GID8, and FMR1. Interacts with the Dyrk kinases HIPK2, DYRK1A, and DYRK1B. Interacts with TP73 isoform Alpha but not with TP53. Interacts with the HGF receptor MET and the integrins ITGB1 and ITGB2, but not with ITGAL. Part of a complex consisting of RANBP9, RAN, DYRK1B and COPS5. Directly interacts with RANBP10. Interacts with YPEL5. Interacts with MKLN1. Interacts with DDX4. Interacts with NGFR. Interacts with Tex19.1 and, probably, Tex19.2. Phosphorylated in response to stress. Post-translationally, ubiquitinated. Polyubiquitination targets the protein for rapid degradation via the ubiquitin system. Ubiquitously expressed, with highest levels in maturating spermatocytes.

It is found in the cytoplasm. Its subcellular location is the cell membrane. The protein resides in the nucleus. In terms of biological role, may act as scaffolding protein, and as adapter protein to couple membrane receptors to intracellular signaling pathways. Acts as a mediator of cell spreading and actin cytoskeleton rearrangement. Core component of the CTLH E3 ubiquitin-protein ligase complex that selectively accepts ubiquitin from UBE2H and mediates ubiquitination and subsequent proteasomal degradation of the transcription factor HBP1. May be involved in signaling of ITGB2/LFA-1 and other integrins. Enhances HGF-MET signaling by recruiting Sos and activating the Ras pathway. Enhances dihydrotestosterone-induced transactivation activity of AR, as well as dexamethasone-induced transactivation activity of NR3C1, but not affect estrogen-induced transactivation. Stabilizes TP73 isoform Alpha, probably by inhibiting its ubiquitination, and increases its proapoptotic activity. Inhibits the kinase activity of DYRK1A and DYRK1B. Inhibits FMR1 binding to RNA. This chain is Ran-binding protein 9, found in Mus musculus (Mouse).